The chain runs to 421 residues: Cyclin-A1 (421 aa).

A disordered region spans residues 1–21 (MHRQSSKSGVALPPVGQGPDA).

It belongs to the cyclin family. Cyclin AB subfamily. Interacts with INCA1 and KLHDC9. Interacts with the CDK2 and CDC2 protein kinases to form a serine/threonine kinase holoenzyme complex. The cyclin subunit imparts substrate specificity to the complex. Found in a complex with CDK2, CABLES1 and CCNE1. In terms of processing, polyubiquitinated via 'Lys-11'-linked ubiquitin by the anaphase-promoting complex (APC/C), leading to its degradation by the proteasome. Deubiquitinated and stabilized by USP37 enables entry into S phase. Ubiquitinated during the G1 phase by the SCF(FBXO31) complex, leading to its proteasomal degradation. Testis and ovaries.

It localises to the nucleus. It is found in the cytoplasm. The protein localises to the cytoskeleton. The protein resides in the spindle. Functionally, may be involved in the control of the cell cycle at the G1/S (start) and G2/M (mitosis) transitions. May primarily function in the control of the germline meiotic cell cycle and additionally in the control of mitotic cell cycle in some somatic cells. In Mus musculus (Mouse), this protein is Cyclin-A1 (Ccna1).